Here is a 495-residue protein sequence, read N- to C-terminus: MSELSSLTIAAARDKLRAREITATELTEACLAEVEGAGALGAFVHNTPDLARAQAEAADARLAAGDAPAMCGIPLGIKDLFCTKGVPSQAASAILGGFKPEYESTVTSQLFAAGAVMLGKLNMDEFAMGSSNETSTYGNAVNPWRRGNEDTALTPGGSSGGSASAVAADLCLAATGTDTGGSIRQPAAFVGITGLKPTYGRCSRWGIVAFASSLDQAGPMTKDVRDCAIMLGAMAGHDPKDSTSADLPVPDFEAMLTGDIRGKVIGIPKEYRMDGMPEEIEALWSRGAEMLRDAGAELRDITLPHTKYALPAYYVIAPAEASSNLARYDGVRFGHRAKLAQGDGITEMYEKTRAEGFGHEVQRRIMIGTYVLSAGFYDAYYNRARKVRALIKRDFDEVFAAGVDAILTPATPSAAFGLGEMAEADPVQMYLNDVFTVTVNLAGLPGIAVPAGLDKQGLPLGLQLIGRPWEEGDLLNTAYALEQAAGFVAKPNRWW.

Residues Lys-78 and Ser-158 each act as charge relay system in the active site. Ser-182 serves as the catalytic Acyl-ester intermediate.

It belongs to the amidase family. GatA subfamily. Heterotrimer of A, B and C subunits.

It carries out the reaction L-glutamyl-tRNA(Gln) + L-glutamine + ATP + H2O = L-glutaminyl-tRNA(Gln) + L-glutamate + ADP + phosphate + H(+). Its function is as follows. Allows the formation of correctly charged Gln-tRNA(Gln) through the transamidation of misacylated Glu-tRNA(Gln) in organisms which lack glutaminyl-tRNA synthetase. The reaction takes place in the presence of glutamine and ATP through an activated gamma-phospho-Glu-tRNA(Gln). This is Glutamyl-tRNA(Gln) amidotransferase subunit A from Dinoroseobacter shibae (strain DSM 16493 / NCIMB 14021 / DFL 12).